The sequence spans 363 residues: MQTRLSNIKHLSRQELRQAIANLGEPAYRTRQIHQWIFSHRAATFEEMTTISLELRNKLADQFRIGFPILADCQQDGSANDPFSTVKLLLELDDNEKIETVLIPSENRMTACVSSQVGCPLQCRFCASGQTGFKRNLSADEIIDQVFSLNDFIRTKHESNEITNIVFMGMGEPLLNFENLKESIEVLSDQSYKFNLPQRKITISTVGIIPGINELGKSGLKTKLAISLHSASQETRESLIPVASEFSLTQLRKTLSEYTSQTGEPVTLVYMLLKGINDSVEDARLLVKFSRSFLCKINLIDYNSIINMKFKPVFNETKDMFIQHILDAGIHVTVRKSHGASINAACGQLAAKGTQKAENRNNL.

Glu99 functions as the Proton acceptor in the catalytic mechanism. Positions 105-341 (SENRMTACVS…VTVRKSHGAS (237 aa)) constitute a Radical SAM core domain. A disulfide bridge links Cys112 with Cys346. Positions 119, 123, and 126 each coordinate [4Fe-4S] cluster. S-adenosyl-L-methionine is bound by residues 171–172 (GE), Ser204, 227–229 (SLH), and Asn303. Residue Cys346 is the S-methylcysteine intermediate of the active site.

This sequence belongs to the radical SAM superfamily. RlmN family. [4Fe-4S] cluster serves as cofactor.

It localises to the cytoplasm. The enzyme catalyses adenosine(2503) in 23S rRNA + 2 reduced [2Fe-2S]-[ferredoxin] + 2 S-adenosyl-L-methionine = 2-methyladenosine(2503) in 23S rRNA + 5'-deoxyadenosine + L-methionine + 2 oxidized [2Fe-2S]-[ferredoxin] + S-adenosyl-L-homocysteine. It carries out the reaction adenosine(37) in tRNA + 2 reduced [2Fe-2S]-[ferredoxin] + 2 S-adenosyl-L-methionine = 2-methyladenosine(37) in tRNA + 5'-deoxyadenosine + L-methionine + 2 oxidized [2Fe-2S]-[ferredoxin] + S-adenosyl-L-homocysteine. Specifically methylates position 2 of adenine 2503 in 23S rRNA and position 2 of adenine 37 in tRNAs. The sequence is that of Probable dual-specificity RNA methyltransferase RlmN from Chlorobium phaeobacteroides (strain DSM 266 / SMG 266 / 2430).